A 119-amino-acid polypeptide reads, in one-letter code: Histone H1B, sperm (119 aa).

An H15 domain is found at 8–77 (THPPVATAVV…QNKGSFRVNK (70 aa)). The tract at residues 76–119 (NKTALPKKKKAAKKPKAKKVKKPKSAAKKKTNRARAPKTKKNRN) is disordered. A compositionally biased stretch (basic residues) spans 80 to 119 (LPKKKKAAKKPKAKKVKKPKSAAKKKTNRARAPKTKKNRN).

Belongs to the histone H1/H5 family.

The protein resides in the nucleus. Its subcellular location is the chromosome. Functionally, histones H1 are necessary for the condensation of nucleosome chains into higher-order structures. This chain is Histone H1B, sperm, found in Platynereis dumerilii (Dumeril's clam worm).